Here is a 320-residue protein sequence, read N- to C-terminus: NAC domain-containing protein 20 (320 aa).

Residues 14 to 170 (LPPGFRFHPT…DWAVCRIFHK (157 aa)) enclose the NAC domain. The DNA-binding element occupies 114 to 176 (IGMKKTLVFY…IFHKSSGIKK (63 aa)).

Forms homodimers. Forms heterodimers with NAC26. In terms of tissue distribution, expressed in developing seeds. Expressed in developing endosperm.

It localises to the nucleus. The protein resides in the endoplasmic reticulum. Functionally, transcription factor that acts redundantly with NAC26 to regulate the expression of genes involved in the biosynthesis of starch and storage proteins in grain. Directly binds to the promoters of starch synthase 1 (SS1), pullulanase (PUL), glutelin A1 (GLUA1), glutelins B4 and B5 (GLUB4 and GLUB5), alpha-globulin and 16 kDa prolamin, and activates their expression. The sequence is that of NAC domain-containing protein 20 from Oryza sativa subsp. japonica (Rice).